A 104-amino-acid chain; its full sequence is A-type ATP synthase subunit F (104 aa).

It belongs to the V-ATPase F subunit family. In terms of assembly, has multiple subunits with at least A(3), B(3), C, D, E, F, H, I and proteolipid K(x).

It is found in the cell membrane. In terms of biological role, component of the A-type ATP synthase that produces ATP from ADP in the presence of a proton gradient across the membrane. The sequence is that of A-type ATP synthase subunit F from Thermoplasma acidophilum (strain ATCC 25905 / DSM 1728 / JCM 9062 / NBRC 15155 / AMRC-C165).